A 294-amino-acid polypeptide reads, in one-letter code: Nucleotide-binding protein CPF_0343 (294 aa).

Position 8 to 15 (8 to 15 (GLSGAGKT)) interacts with ATP. 59–62 (DIRG) provides a ligand contact to GTP.

This sequence belongs to the RapZ-like family.

Functionally, displays ATPase and GTPase activities. The polypeptide is Nucleotide-binding protein CPF_0343 (Clostridium perfringens (strain ATCC 13124 / DSM 756 / JCM 1290 / NCIMB 6125 / NCTC 8237 / Type A)).